The sequence spans 1117 residues: A disintegrin and metalloproteinase with thrombospondin motifs 6 (1117 aa).

The first 21 residues, Met1 to Phe21, serve as a signal peptide directing secretion. Residues His22–Arg244 constitute a propeptide that is removed on maturation. 4 N-linked (GlcNAc...) asparagine glycosylation sites follow: Asn99, Asn172, Asn222, and Asn234. In terms of domain architecture, Peptidase M12B spans Arg250–Pro468. Disulfide bonds link Cys326–Cys387, Cys362–Cys369, Cys381–Cys463, Cys420–Cys447, Cys490–Cys512, Cys501–Cys519, Cys507–Cys542, Cys532–Cys547, Cys570–Cys607, Cys574–Cys612, and Cys585–Cys597. His403 contacts Zn(2+). Glu404 is a catalytic residue. 2 residues coordinate Zn(2+): His407 and His413. Residues Gly495–Ile557 form the Disintegrin domain. The 56-residue stretch at Asp558 to Pro613 folds into the TSP type-1 1 domain. The interval Asp717–Thr843 is spacer. Asn724 carries an N-linked (GlcNAc...) asparagine glycan. TSP type-1 domains are found at residues Val840–Pro900, Glu902–Pro960, Gln962–Pro1007, and Pro1018–Asp1073. 3 cysteine pairs are disulfide-bonded: Cys911/Cys954, Cys915/Cys959, and Cys926/Cys943. The N-linked (GlcNAc...) asparagine glycan is linked to Asn956. The region spanning Asn1079–His1117 is the PLAC domain.

Requires Zn(2+) as cofactor. In terms of processing, the precursor is cleaved by a furin endopeptidase. Post-translationally, glycosylated. Can be O-fucosylated by POFUT2 on a serine or a threonine residue found within the consensus sequence C1-X(2)-(S/T)-C2-G of the TSP type-1 repeat domains where C1 and C2 are the first and second cysteine residue of the repeat, respectively. Fucosylated repeats can then be further glycosylated by the addition of a beta-1,3-glucose residue by the glucosyltransferase, B3GALTL. Fucosylation mediates the efficient secretion of ADAMTS family members. Can also be C-glycosylated with one or two mannose molecules on tryptophan residues within the consensus sequence W-X-X-W of the TPRs, and N-glycosylated. These other glycosylations can also facilitate secretion. In terms of tissue distribution, expressed at low levels in placenta and barely detectable in a number of other tissues.

It is found in the secreted. The protein resides in the extracellular space. The protein localises to the extracellular matrix. The chain is A disintegrin and metalloproteinase with thrombospondin motifs 6 (ADAMTS6) from Homo sapiens (Human).